Reading from the N-terminus, the 258-residue chain is UPF0246 protein YaaA (258 aa).

Belongs to the UPF0246 family.

This Escherichia coli O17:K52:H18 (strain UMN026 / ExPEC) protein is UPF0246 protein YaaA.